A 461-amino-acid chain; its full sequence is Cyclin-A2-4 (461 aa).

It belongs to the cyclin family. Cyclin AB subfamily.

The protein is Cyclin-A2-4 (CYCA2-4) of Arabidopsis thaliana (Mouse-ear cress).